The chain runs to 200 residues: Arylesterase (200 aa).

The signal sequence occupies residues 1 to 19 (MIRLLSLVLFFCLSAASQA). The active-site Nucleophile is the S29. Active-site residues include D176 and H179.

This sequence belongs to the 'GDSL' lipolytic enzyme family. Homodimer.

It catalyses the reaction a phenyl acetate + H2O = a phenol + acetate + H(+). Its function is as follows. Favors the hydrolysis of several arylesters. This Vibrio mimicus protein is Arylesterase.